The chain runs to 269 residues: uncharacterized protein (269 aa).

Positions 152–197 constitute an RPE1 insert domain; that stretch reads RYFSKPAYRNAFKANTIRATTAYKKVFNDPSLGSTYPLEVPLGKMS.

This is an uncharacterized protein from Rickettsia prowazekii (strain Madrid E).